The primary structure comprises 61 residues: MSRTSLEVKAKRKPKFSARAYNRCPLCGRPRAFLRQFGICRICFRNMALRGELPGVRKSSW.

Residues cysteine 24, cysteine 27, cysteine 40, and cysteine 43 each coordinate Zn(2+).

Belongs to the universal ribosomal protein uS14 family. Zinc-binding uS14 subfamily. Part of the 30S ribosomal subunit. Contacts proteins S3 and S10. The cofactor is Zn(2+).

In terms of biological role, binds 16S rRNA, required for the assembly of 30S particles and may also be responsible for determining the conformation of the 16S rRNA at the A site. The polypeptide is Small ribosomal subunit protein uS14 (Desulfovibrio desulfuricans (strain ATCC 27774 / DSM 6949 / MB)).